The primary structure comprises 502 residues: Cytochrome P450 71B20 (502 aa).

Residues 1–21 (MAISFLCFCLITLASLIFFAK) traverse the membrane as a helical segment. Cysteine 444 lines the heme pocket.

This sequence belongs to the cytochrome P450 family. Requires heme as cofactor.

It localises to the membrane. This chain is Cytochrome P450 71B20 (CYP71B20), found in Arabidopsis thaliana (Mouse-ear cress).